Reading from the N-terminus, the 342-residue chain is MLVLGIESSCDETGLALYDTERGLLAHALHSQIAMHREYGGVVPELASRDHIRRALPLLEEVMERAGTAAGDIDAIAYTQGPGLAGALLVGASVANALAMAWDKPTIGIHHLEGHLLSPLLVDEPPPFPFVALLVSGGHTQLMRVTDVGVYETLGETLDDAAGEAFDKTAKLLGLGYPGGPEVSRMAEFGTPGAVVLPRPMLHSGDLDFSFSGLKTAVLTHAKKLGGANICEQAKADLARGFVDAAVEVLAAKSLAALKKTGLNRLVVAGGVGANRQLREALSAAAKKRNFYVHYPDLSLCTDNGAMIALAGALRLQRWPDQSGKDYAFTVKPRWDLTSLAR.

H111 and H115 together coordinate Fe cation. Substrate contacts are provided by residues 134–138 (LVSGG), D167, G180, and N275. D303 contributes to the Fe cation binding site.

This sequence belongs to the KAE1 / TsaD family. The cofactor is Fe(2+).

It localises to the cytoplasm. The enzyme catalyses L-threonylcarbamoyladenylate + adenosine(37) in tRNA = N(6)-L-threonylcarbamoyladenosine(37) in tRNA + AMP + H(+). Functionally, required for the formation of a threonylcarbamoyl group on adenosine at position 37 (t(6)A37) in tRNAs that read codons beginning with adenine. Is involved in the transfer of the threonylcarbamoyl moiety of threonylcarbamoyl-AMP (TC-AMP) to the N6 group of A37, together with TsaE and TsaB. TsaD likely plays a direct catalytic role in this reaction. The polypeptide is tRNA N6-adenosine threonylcarbamoyltransferase (Paraburkholderia xenovorans (strain LB400)).